Reading from the N-terminus, the 567-residue chain is Urease subunit alpha (567 aa).

The Urease domain maps to 129-567 (GGIDSHIHFI…LPMAQRYFLF (439 aa)). 3 residues coordinate Ni(2+): H134, H136, and K217. Position 217 is an N6-carboxylysine (K217). H219 contacts substrate. H246 and H272 together coordinate Ni(2+). The active-site Proton donor is the H320. D360 serves as a coordination point for Ni(2+).

This sequence belongs to the metallo-dependent hydrolases superfamily. Urease alpha subunit family. Heterotrimer of UreA (gamma), UreB (beta) and UreC (alpha) subunits. Three heterotrimers associate to form the active enzyme. It depends on Ni cation as a cofactor. In terms of processing, carboxylation allows a single lysine to coordinate two nickel ions.

Its subcellular location is the cytoplasm. It carries out the reaction urea + 2 H2O + H(+) = hydrogencarbonate + 2 NH4(+). Its pathway is nitrogen metabolism; urea degradation; CO(2) and NH(3) from urea (urease route): step 1/1. The sequence is that of Urease subunit alpha from Tolumonas auensis (strain DSM 9187 / NBRC 110442 / TA 4).